Reading from the N-terminus, the 536-residue chain is Peptide chain release factor 3 (536 aa).

The region spanning S13–Q281 is the tr-type G domain. GTP-binding positions include S22–T29, D90–H94, and N144–D147.

Belongs to the TRAFAC class translation factor GTPase superfamily. Classic translation factor GTPase family. PrfC subfamily.

It localises to the cytoplasm. In terms of biological role, increases the formation of ribosomal termination complexes and stimulates activities of RF-1 and RF-2. It binds guanine nucleotides and has strong preference for UGA stop codons. It may interact directly with the ribosome. The stimulation of RF-1 and RF-2 is significantly reduced by GTP and GDP, but not by GMP. This Chromobacterium violaceum (strain ATCC 12472 / DSM 30191 / JCM 1249 / CCUG 213 / NBRC 12614 / NCIMB 9131 / NCTC 9757 / MK) protein is Peptide chain release factor 3.